Reading from the N-terminus, the 364-residue chain is Chaperone protein DnaJ (364 aa).

One can recognise a J domain in the interval 5–71; sequence DYYEILGVAK…QKRQAYDQFG (67 aa). The CR-type zinc-finger motif lies at 127–205; it reads GSTVKIRIPK…CRGQGLVRKQ (79 aa). Residues Cys-140, Cys-143, Cys-157, Cys-160, Cys-179, Cys-182, Cys-193, and Cys-196 each contribute to the Zn(2+) site. 4 CXXCXGXG motif repeats span residues 140–147, 157–164, 179–186, and 193–200; these read CDTCSGIG, CSICSGVG, CGTCSGTG, and CGTCRGQG.

Belongs to the DnaJ family. In terms of assembly, homodimer. It depends on Zn(2+) as a cofactor.

Its subcellular location is the cytoplasm. Its function is as follows. Participates actively in the response to hyperosmotic and heat shock by preventing the aggregation of stress-denatured proteins and by disaggregating proteins, also in an autonomous, DnaK-independent fashion. Unfolded proteins bind initially to DnaJ; upon interaction with the DnaJ-bound protein, DnaK hydrolyzes its bound ATP, resulting in the formation of a stable complex. GrpE releases ADP from DnaK; ATP binding to DnaK triggers the release of the substrate protein, thus completing the reaction cycle. Several rounds of ATP-dependent interactions between DnaJ, DnaK and GrpE are required for fully efficient folding. Also involved, together with DnaK and GrpE, in the DNA replication of plasmids through activation of initiation proteins. The polypeptide is Chaperone protein DnaJ (Ruthia magnifica subsp. Calyptogena magnifica).